Here is a 337-residue protein sequence, read N- to C-terminus: Ornithine carbamoyltransferase (337 aa).

Carbamoyl phosphate is bound by residues 57–60, Gln84, Arg108, and 135–138; these read STRT and HPTQ. Residues Asn167, Asp231, and 235-236 contribute to the L-ornithine site; that span reads SM. Carbamoyl phosphate contacts are provided by residues 272 to 273 and Arg317; that span reads CL.

Belongs to the aspartate/ornithine carbamoyltransferase superfamily. OTCase family.

Its subcellular location is the cytoplasm. The catalysed reaction is carbamoyl phosphate + L-ornithine = L-citrulline + phosphate + H(+). The protein operates within amino-acid degradation; L-arginine degradation via ADI pathway; carbamoyl phosphate from L-arginine: step 2/2. In terms of biological role, reversibly catalyzes the transfer of the carbamoyl group from carbamoyl phosphate (CP) to the N(epsilon) atom of ornithine (ORN) to produce L-citrulline. The sequence is that of Ornithine carbamoyltransferase from Streptococcus equi subsp. equi (strain 4047).